The primary structure comprises 140 residues: Nucleoside diphosphate kinase (140 aa).

6 residues coordinate ATP: lysine 11, phenylalanine 59, arginine 87, threonine 93, arginine 104, and asparagine 114. The active-site Pros-phosphohistidine intermediate is histidine 117.

This sequence belongs to the NDK family. As to quaternary structure, homotetramer. Requires Mg(2+) as cofactor.

It localises to the cytoplasm. The catalysed reaction is a 2'-deoxyribonucleoside 5'-diphosphate + ATP = a 2'-deoxyribonucleoside 5'-triphosphate + ADP. The enzyme catalyses a ribonucleoside 5'-diphosphate + ATP = a ribonucleoside 5'-triphosphate + ADP. Functionally, major role in the synthesis of nucleoside triphosphates other than ATP. The ATP gamma phosphate is transferred to the NDP beta phosphate via a ping-pong mechanism, using a phosphorylated active-site intermediate. The protein is Nucleoside diphosphate kinase of Brucella melitensis biotype 1 (strain ATCC 23456 / CCUG 17765 / NCTC 10094 / 16M).